Reading from the N-terminus, the 34-residue chain is Photosystem II reaction center protein M (34 aa).

Residues isoleucine 5–leucine 25 traverse the membrane as a helical segment.

This sequence belongs to the PsbM family. PSII is composed of 1 copy each of membrane proteins PsbA, PsbB, PsbC, PsbD, PsbE, PsbF, PsbH, PsbI, PsbJ, PsbK, PsbL, PsbM, PsbT, PsbX, PsbY, PsbZ, Psb30/Ycf12, at least 3 peripheral proteins of the oxygen-evolving complex and a large number of cofactors. It forms dimeric complexes.

It localises to the plastid. Its subcellular location is the chloroplast thylakoid membrane. One of the components of the core complex of photosystem II (PSII). PSII is a light-driven water:plastoquinone oxidoreductase that uses light energy to abstract electrons from H(2)O, generating O(2) and a proton gradient subsequently used for ATP formation. It consists of a core antenna complex that captures photons, and an electron transfer chain that converts photonic excitation into a charge separation. This subunit is found at the monomer-monomer interface. This chain is Photosystem II reaction center protein M, found in Angiopteris evecta (Mule's foot fern).